Reading from the N-terminus, the 428-residue chain is Enolase (428 aa).

Q163 is a binding site for (2R)-2-phosphoglycerate. E205 acts as the Proton donor in catalysis. Residues D242, E285, and D312 each coordinate Mg(2+). Positions 337, 366, 367, and 388 each coordinate (2R)-2-phosphoglycerate. Residue K337 is the Proton acceptor of the active site.

The protein belongs to the enolase family. Mg(2+) serves as cofactor.

The protein resides in the cytoplasm. It localises to the secreted. The protein localises to the cell surface. It catalyses the reaction (2R)-2-phosphoglycerate = phosphoenolpyruvate + H2O. It participates in carbohydrate degradation; glycolysis; pyruvate from D-glyceraldehyde 3-phosphate: step 4/5. Functionally, catalyzes the reversible conversion of 2-phosphoglycerate (2-PG) into phosphoenolpyruvate (PEP). It is essential for the degradation of carbohydrates via glycolysis. The sequence is that of Enolase from Polynucleobacter asymbioticus (strain DSM 18221 / CIP 109841 / QLW-P1DMWA-1) (Polynucleobacter necessarius subsp. asymbioticus).